The primary structure comprises 965 residues: Collagen alpha-1(I) chain (965 aa).

The segment at Gly1–Pro965 is disordered. Residues Pro18, Pro21, Pro23, Pro32, Pro35, Pro38, Pro53, Pro68, Pro74, Pro83, and Pro89 each carry the 4-hydroxyproline modification. The segment covering Gln26 to Met44 has biased composition (low complexity). A compositionally biased stretch (basic and acidic residues) spans Asn56–Glu70. Lys92 is subject to 5-hydroxylysine; alternate. Lys92 carries an O-linked (Gal...) hydroxylysine; alternate glycan. Ser98 is modified (phosphoserine). Positions Asp106–Asn122 are enriched in low complexity. Pro116, Pro119, Pro125, Pro139, Pro160, Pro169, Pro172, Pro199, Pro202, Pro214, Pro220, Pro229, Pro235, Pro238, and Pro253 each carry 4-hydroxyproline. The segment covering Pro139–Ala157 has biased composition (low complexity). A compositionally biased stretch (pro residues) spans Pro159–Phe171. Over residues Ala205 to Ser244 the composition is skewed to low complexity. Position 256 is a 5-hydroxylysine (Lys256). 4-hydroxyproline is present on residues Pro262, Pro265, Pro269, Pro278, Pro293, Pro299, Pro308, and Pro314. The segment covering Gly303 to Gly312 has biased composition (gly residues). Lys323 carries the 5-hydroxylysine modification. A 4-hydroxyproline mark is found at Pro326, Pro332, Pro338, Pro347, Pro350, Pro359, Pro368, Pro374, Pro386, Pro395, Pro404, Pro407, Pro425, Pro442, Pro448, Pro454, Pro460, Pro466, Pro472, Pro484, Pro493, Pro506, Pro512, and Pro521. Positions Lys341–Arg367 are enriched in low complexity. The span at Ala376–Pro395 shows a compositional bias: low complexity. Residues Pro454–Gln463 show a composition bias toward low complexity. At Lys533 the chain carries 5-hydroxylysine. 4-hydroxyproline is present on residues Pro539, Pro554, and Pro560. Positions Ser566–Ala580 are enriched in low complexity. A Phosphoserine modification is found at Ser569. 8 positions are modified to 4-hydroxyproline: Pro581, Pro587, Pro590, Pro599, Pro605, Pro623, Pro632, and Pro641. Residues Ala593–Ala620 show a composition bias toward low complexity. At Lys644 the chain carries 5-hydroxylysine. Residues Ser649–Val665 show a composition bias toward low complexity. 4-hydroxyproline is present on residues Pro653 and Pro659. Pro667 is subject to 3-hydroxyproline. 14 positions are modified to 4-hydroxyproline: Pro668, Pro677, Pro680, Pro716, Pro725, Pro743, Pro752, Pro755, Pro761, Pro776, Pro782, Pro788, Pro796, and Pro802. Residues Ser710–Pro725 show a composition bias toward low complexity. Residues Pro775 to Ala785 show a composition bias toward pro residues. Lys811 carries the 5-hydroxylysine modification. Residues Pro819, Pro822, and Pro825 each carry the 4-hydroxyproline modification. Pro residues predominate over residues Pro819–Val831. The span at Ala851–Pro865 shows a compositional bias: low complexity. A compositionally biased stretch (basic and acidic residues) spans Arg866 to Ile880. The residue at position 869 (Lys869) is a 5-hydroxylysine. 5-hydroxylysine; alternate is present on Lys881. A glycan (O-linked (Gal...) hydroxylysine; alternate) is linked at Lys881. 4 positions are modified to 4-hydroxyproline: Pro896, Pro899, Pro917, and Pro932. Residues Pro899–Pro932 show a composition bias toward low complexity. Pro937 bears the 3-hydroxyproline mark. 4-hydroxyproline is present on Pro938. The span at Val950–Pro965 shows a compositional bias: pro residues. Pro952 is modified (3-hydroxyproline). At Pro953 the chain carries 4-hydroxyproline. Pro955 carries the post-translational modification 3-hydroxyproline. Pro956 carries the 4-hydroxyproline modification. The residue at position 958 (Pro958) is a 3-hydroxyproline. Residues Pro959, Pro962, and Pro965 each carry the 4-hydroxyproline modification.

Belongs to the fibrillar collagen family. As to quaternary structure, trimers of one alpha 2(I) and two alpha 1(I) chains. Post-translationally, contains mostly 4-hydroxyproline. Proline residues at the third position of the tripeptide repeating unit (G-X-Y) are hydroxylated in some or all of the chains. In terms of processing, contains 3-hydroxyproline at a few sites. This modification occurs on the first proline residue in the sequence motif Gly-Pro-Hyp, where Hyp is 4-hydroxyproline. Lysine residues at the third position of the tripeptide repeating unit (G-X-Y) are 5-hydroxylated in some or all of the chains. Post-translationally, O-glycosylated on hydroxylated lysine residues. The O-linked glycan consists of a Glc-Gal disaccharide. In terms of tissue distribution, expressed in bones.

The protein resides in the secreted. Its subcellular location is the extracellular space. It is found in the extracellular matrix. Functionally, type I collagen is a member of group I collagen (fibrillar forming collagen). The polypeptide is Collagen alpha-1(I) chain (Acratocnus sp. (strain SLP-2019) (Ground sloth)).